The following is a 602-amino-acid chain: MSERRRSAVALSSRAHAFSVEALIGSNKKRKLRDWEEKGLDLSMEALSPAGPLGDTDDPATHGLEPHPDSEQSTGSDSEVLTERTSCSFSTHTDLASGAAGPVPAAMSSMEEIQVELQCADLWKRFHDIGTEMIITKAGRRMFPAMRVKITGLDPHQQYYIAMDIVPVDNKRYRYVYHSSKWMVAGNADSPVPPRVYIHPDSLASGDTWMRQVVSFDKLKLTNNELDDQGHIILHSMHKYQPRVHVIRKDFSSDLSPTKPVPVGDGVKTFNFPETVFTTVTAYQNQQITRLKIDRNPFAKGFRDSGRNRTGLEAIMETYAFWRPPVRTLTFEDFTTMQKQQGGSTGTSPTTSSTGTPSPSASSHLLSPSCSPPTFHLAPNTFNVGCRESQLCNLNLSDYPPCARSNMAALQSYPGLSDSGYNRLQSGTASATQPSETFMPQRTPSLISGIPTPPSLPSNSKMEAYGGQLGSFPTSQFQYVMQAGNAASSSSSPHMFGGSHMQQSSYNAFSLHNPYNLYGYNFPTSPRLAASPEKLSASQSTLLCSSPSNGAFGERQYLPTGMEHSMHMISPSTNNQQATNTCDGRQYGAVPGSASQMSVHMV.

The disordered stretch occupies residues 43 to 95 (SMEALSPAGPLGDTDDPATHGLEPHPDSEQSTGSDSEVLTERTSCSFSTHTDL). A compositionally biased stretch (polar residues) spans 71–94 (EQSTGSDSEVLTERTSCSFSTHTD). The segment at residues 122–304 (LWKRFHDIGT…RNPFAKGFRD (183 aa)) is a DNA-binding region (T-box). Thr330 is subject to Phosphothreonine. Disordered regions lie at residues 338–369 (QKQQ…LSPS) and 425–444 (QSGT…QRTP). Residues 346 to 369 (GTSPTTSSTGTPSPSASSHLLSPS) show a composition bias toward low complexity.

In terms of assembly, can form a heterodimer with TBX18.

The protein localises to the nucleus. Probable transcriptional regulator involved in the development of the skeleton of the limb, vertebral column and head. Acts by controlling the number of mesenchymal precursor cells and chondrocytes. The sequence is that of T-box transcription factor TBX15 (Tbx15) from Mus musculus (Mouse).